We begin with the raw amino-acid sequence, 200 residues long: Small ribosomal subunit protein uS4 (200 aa).

Residues 22-42 (TGKELEKRPYAPGPHGPNQRK) form a disordered region. Residues 92–152 (ARLDNLVYRM…EKSNNLVVVK (61 aa)) form the S4 RNA-binding domain.

Belongs to the universal ribosomal protein uS4 family. In terms of assembly, part of the 30S ribosomal subunit. Contacts protein S5. The interaction surface between S4 and S5 is involved in control of translational fidelity.

In terms of biological role, one of the primary rRNA binding proteins, it binds directly to 16S rRNA where it nucleates assembly of the body of the 30S subunit. Its function is as follows. With S5 and S12 plays an important role in translational accuracy. The chain is Small ribosomal subunit protein uS4 from Bacillus cereus (strain Q1).